A 70-amino-acid polypeptide reads, in one-letter code: Melittin (70 aa).

The N-terminal stretch at 1–21 is a signal peptide; it reads MKFLVNVALVFMVVYISYIYA. Positions 22-43 are cleaved as a propeptide — removed by a dipeptidylpeptidase; sequence APEPEPAPEPEAEADAEADPEA. Gly44 bears the N-formylglycine; partial mark. Gln69 bears the Glutamine amide mark.

The protein belongs to the melittin family. In terms of assembly, monomer (in solution and for integration into membranes), homotetramer (in solution and potentially as a toroidal pore in membranes), and potenially homomultimer (as a toroidal pore in membranes). As to expression, expressed by the venom gland.

The protein localises to the secreted. It is found in the target cell membrane. In terms of biological role, melittin: Main toxin of bee venom with strong antimicrobial activity and hemolytic activity. It has enhancing effects on bee venom phospholipase A2 activity. This amphipathic toxin binds to negatively charged membrane surface and forms pore by inserting into lipid bilayers inducing the leakage of ions and molecules and the enhancement of permeability that ultimately leads to cell lysis. It acts as a voltage-gated pore with higher selectivity for anions over cations. The ion conductance has been shown to be voltage-dependent. Self-association of melittin in membranes is promoted by high ionic strength, but not by the presence of negatively charged lipids. In vivo, intradermal injection into healthy human volunteers produce sharp pain sensation and an inflammatory response. It produces pain by activating primary nociceptor cells directly and indirectly due to its ability to activate plasma membrane phospholipase A2 and its pore-forming activity. In the context of inflammation and cancer tests, is highly cytotoxic to normal cells, highly induces calcium signaling and almost completely prevents cAMP production. In addition, prevents LPS-induced nitric oxid (NO) synthesis but does not affect the IP3 signaling and pro-inflammatory activation of endothelial cells. Also shows significant antiproliferative activity on the breast cancer cell line MDA-MB-231. Melittin-S: 1.4-fold less hemolytic and adopts a less organized secondary structure than melittin. Functionally, melittin-2: Has strong hemolytic activity. The chain is Melittin (MELT) from Apis mellifera (Honeybee).